The primary structure comprises 157 residues: S-ribosylhomocysteine lyase (157 aa).

Residues histidine 54, histidine 58, and cysteine 126 each coordinate Fe cation.

This sequence belongs to the LuxS family. Homodimer. The cofactor is Fe cation.

It catalyses the reaction S-(5-deoxy-D-ribos-5-yl)-L-homocysteine = (S)-4,5-dihydroxypentane-2,3-dione + L-homocysteine. In terms of biological role, involved in the synthesis of autoinducer 2 (AI-2) which is secreted by bacteria and is used to communicate both the cell density and the metabolic potential of the environment. The regulation of gene expression in response to changes in cell density is called quorum sensing. Catalyzes the transformation of S-ribosylhomocysteine (RHC) to homocysteine (HC) and 4,5-dihydroxy-2,3-pentadione (DPD). The protein is S-ribosylhomocysteine lyase of Bacillus licheniformis (strain ATCC 14580 / DSM 13 / JCM 2505 / CCUG 7422 / NBRC 12200 / NCIMB 9375 / NCTC 10341 / NRRL NRS-1264 / Gibson 46).